A 217-amino-acid polypeptide reads, in one-letter code: DNA transformation protein TfoX (217 aa).

Belongs to the Sxy/TfoX family.

In terms of biological role, required for DNA transformation. Positively regulates genes required for DNA transformation (late competence-specific genes) in association with CRP. Required for expression of the late competence-specific gene, com101A. Required for expression of the dprABC operon. The sequence is that of DNA transformation protein TfoX from Haemophilus influenzae (strain ATCC 51907 / DSM 11121 / KW20 / Rd).